The sequence spans 832 residues: Protein P (832 aa).

Positions 1 to 177 are terminal protein domain (TP); sequence MPLSYQHFRK…FCGSPYSWEQ (177 aa). The spacer stretch occupies residues 178–335; that stretch reads ELQHGAESFN…HCLSHLVNLL (158 aa). 2 stretches are compositionally biased toward polar residues: residues 205-220 and 251-263; these read SKHQ…QQGQ and SGHN…ESAS. The disordered stretch occupies residues 205-263; the sequence is SKHQQSRLGLQPQQGQLAKGQRGRSGSVRSRAHSATRRSVGVEPSGSGHNNNSASESAS. Positions 336 to 679 are polymerase/reverse transcriptase domain (RT); the sequence is EDWGPCTEHG…YATLYPVARQ (344 aa). The Reverse transcriptase domain occupies 346 to 589; the sequence is KHHIRIPRTP…YSLNFMGYVI (244 aa). Residues Asp418, Asp540, and Asp541 each contribute to the Mg(2+) site.

This sequence belongs to the hepadnaviridae P protein family.

It catalyses the reaction DNA(n) + a 2'-deoxyribonucleoside 5'-triphosphate = DNA(n+1) + diphosphate. It carries out the reaction Endonucleolytic cleavage to 5'-phosphomonoester.. Its activity is regulated as follows. Activated by host HSP70 and HSP40 in vitro to be able to bind the epsilon loop of the pgRNA. Because deletion of the RNase H region renders the protein partly chaperone-independent, the chaperones may be needed indirectly to relieve occlusion of the RNA-binding site by this domain. Inhibited by several reverse-transcriptase inhibitors: Lamivudine, Adefovir and Entecavir. Multifunctional enzyme that converts the viral RNA genome into dsDNA in viral cytoplasmic capsids. This enzyme displays a DNA polymerase activity that can copy either DNA or RNA templates, and a ribonuclease H (RNase H) activity that cleaves the RNA strand of RNA-DNA heteroduplexes in a partially processive 3'- to 5'-endonucleasic mode. Neo-synthesized pregenomic RNA (pgRNA) are encapsidated together with the P protein, and reverse-transcribed inside the nucleocapsid. Initiation of reverse-transcription occurs first by binding the epsilon loop on the pgRNA genome, and is initiated by protein priming, thereby the 5'-end of (-)DNA is covalently linked to P protein. Partial (+)DNA is synthesized from the (-)DNA template and generates the relaxed circular DNA (RC-DNA) genome. After budding and infection, the RC-DNA migrates in the nucleus, and is converted into a plasmid-like covalently closed circular DNA (cccDNA). The activity of P protein does not seem to be necessary for cccDNA generation, and is presumably released from (+)DNA by host nuclear DNA repair machinery. The protein is Protein P of Gorilla gorilla (western gorilla).